Here is a 194-residue protein sequence, read N- to C-terminus: Probable nicotinate-nucleotide adenylyltransferase (194 aa).

Belongs to the NadD family.

The catalysed reaction is nicotinate beta-D-ribonucleotide + ATP + H(+) = deamido-NAD(+) + diphosphate. It participates in cofactor biosynthesis; NAD(+) biosynthesis; deamido-NAD(+) from nicotinate D-ribonucleotide: step 1/1. Catalyzes the reversible adenylation of nicotinate mononucleotide (NaMN) to nicotinic acid adenine dinucleotide (NaAD). The polypeptide is Probable nicotinate-nucleotide adenylyltransferase (Chlorobium luteolum (strain DSM 273 / BCRC 81028 / 2530) (Pelodictyon luteolum)).